A 301-amino-acid polypeptide reads, in one-letter code: Uricase-2 isozyme 2 (301 aa).

Catalysis depends on charge relay system residues Lys17 and Thr63. Urate contacts are provided by Thr63, Asp64, Phe165, Arg182, Val237, Gln238, and Asn257. The Charge relay system role is filled by His259. The Microbody targeting signal signature appears at 299-301 (SKL).

It belongs to the uricase family.

It localises to the peroxisome. The catalysed reaction is urate + O2 + H2O = 5-hydroxyisourate + H2O2. Its pathway is purine metabolism; urate degradation; (S)-allantoin from urate: step 1/3. Catalyzes the oxidation of uric acid to 5-hydroxyisourate, which is further processed to form (S)-allantoin. The chain is Uricase-2 isozyme 2 from Canavalia lineata (Beach bean).